Here is a 91-residue protein sequence, read N- to C-terminus: Large ribosomal subunit protein bL27 (91 aa).

It belongs to the bacterial ribosomal protein bL27 family.

The sequence is that of Large ribosomal subunit protein bL27 from Pseudomonas savastanoi pv. phaseolicola (strain 1448A / Race 6) (Pseudomonas syringae pv. phaseolicola (strain 1448A / Race 6)).